Here is a 443-residue protein sequence, read N- to C-terminus: ATP-dependent protease ATPase subunit HslU (443 aa).

ATP-binding positions include Ile-19, 61-66, Asp-256, Glu-321, and Arg-393; that span reads GVGKTE.

The protein belongs to the ClpX chaperone family. HslU subfamily. In terms of assembly, a double ring-shaped homohexamer of HslV is capped on each side by a ring-shaped HslU homohexamer. The assembly of the HslU/HslV complex is dependent on binding of ATP.

The protein resides in the cytoplasm. In terms of biological role, ATPase subunit of a proteasome-like degradation complex; this subunit has chaperone activity. The binding of ATP and its subsequent hydrolysis by HslU are essential for unfolding of protein substrates subsequently hydrolyzed by HslV. HslU recognizes the N-terminal part of its protein substrates and unfolds these before they are guided to HslV for hydrolysis. The sequence is that of ATP-dependent protease ATPase subunit HslU from Cupriavidus pinatubonensis (strain JMP 134 / LMG 1197) (Cupriavidus necator (strain JMP 134)).